Consider the following 994-residue polypeptide: Sarcoplasmic/endoplasmic reticulum calcium ATPase 1 (994 aa).

The Cytoplasmic portion of the chain corresponds to 1 to 48 (MEAAHSKSTEECLSYFGVSETTGLTPDQVKRHLEKYGPNELPAEEGKS). A helical membrane pass occupies residues 49-69 (LWELVVEQFEDLLVRILLLAA). Topologically, residues 70–89 (CISFVLAWFEEGEETVTAFV) are lumenal. A helical membrane pass occupies residues 90 to 110 (EPFVILLILIANAIVGVWQER). Residues 111-253 (NAENAIEALK…QDKTPLQQKL (143 aa)) are Cytoplasmic-facing. Residues 254-273 (DEFGEQLSKVISLICVAVWL) traverse the membrane as a helical segment. Residues 274 to 295 (INIGHFNDPVHGGSWFRGAIYY) are Lumenal-facing. Residues 296-313 (FKIAVALAVAAIPEGLPA) form a helical membrane-spanning segment. Ca(2+)-binding residues include V304, A305, I307, and E309. Residues 314–757 (VITTCLALGT…EEGRAIYNNM (444 aa)) are Cytoplasmic-facing. The active-site 4-aspartylphosphate intermediate is the D351. Residues D351 and T353 each coordinate Mg(2+). Position 353 (T353) interacts with ATP. T441 is subject to Phosphothreonine. 4 residues coordinate ATP: E442, R489, K515, and R560. T569 is subject to Phosphothreonine. At S581 the chain carries Phosphoserine. ATP is bound by residues T625, G626, and D627. At S643 the chain carries Phosphoserine. Positions 678 and 684 each coordinate ATP. Position 703 (D703) interacts with Mg(2+). N706 serves as a coordination point for ATP. Residues 758 to 777 (KQFIRYLISSNVGEVVCIFL) form a helical membrane-spanning segment. Ca(2+)-binding residues include N768 and E771. Residues 778–787 (TAALGLPEAL) are Lumenal-facing. The helical transmembrane segment at 788–808 (IPVQLLWVNLVTDGLPATALG) threads the bilayer. The interval 788–808 (IPVQLLWVNLVTDGLPATALG) is interaction with PLN. 3 residues coordinate Ca(2+): N796, T799, and D800. Over 809-828 (FNPPDLDIMDRPPRSPKEPL) the chain is Cytoplasmic. The chain crosses the membrane as a helical span at residues 829-851 (ISGWLFFRYMAIGGYVGAATVGA). Over 852 to 897 (AAWWFLYAEDGPHVSYHQLTHFMQCTEHNPEFDGLDCEVFEAPEPM) the chain is Lumenal. C876 and C888 form a disulfide bridge. The chain crosses the membrane as a helical span at residues 898 to 917 (TMALSVLVTIEMCNALNSLS). Residue E908 participates in Ca(2+) binding. Residues 918–930 (ENQSLLRMPPWVN) are Cytoplasmic-facing. Residues 931–949 (IWLLGSICLSMSLHFLILY) traverse the membrane as a helical segment. An interaction with PLN region spans residues 932–943 (WLLGSICLSMSL). Topologically, residues 950-964 (VDPLPMIFKLRALDF) are lumenal. The chain crosses the membrane as a helical span at residues 965–985 (TQWLMVLKISLPVIGLDELLK). Topologically, residues 986–994 (FIARNYLEG) are cytoplasmic.

It belongs to the cation transport ATPase (P-type) (TC 3.A.3) family. Type IIA subfamily. As to quaternary structure, interacts with sarcolipin (SLN). Interacts with phospholamban (PLN). Interacts with myoregulin (MRLN). Interacts with DWORF. Interacts with VMP1. Mg(2+) is required as a cofactor.

The protein localises to the endoplasmic reticulum membrane. It localises to the sarcoplasmic reticulum membrane. The catalysed reaction is Ca(2+)(in) + ATP + H2O = Ca(2+)(out) + ADP + phosphate + H(+). Inhibited by sarcolipin (SLN) and myoregulin (MRLN). Has also been shown to be reversibly inhibited by phospholamban (PLN) at low calcium concentrations in vitro. Dephosphorylated PLN decreases the apparent affinity of the ATPase for calcium in vitro and this inhibition is regulated by the phosphorylation of PLN. Enhanced by DWORF; DWORF increases activity by displacing sarcolipin (SLN), phospholamban (PLN) and myoregulin (MRLN). In terms of biological role, key regulator of striated muscle performance by acting as the major Ca(2+) ATPase responsible for the reuptake of cytosolic Ca(2+) into the sarcoplasmic reticulum. Catalyzes the hydrolysis of ATP coupled with the translocation of calcium from the cytosol to the sarcoplasmic reticulum lumen. Contributes to calcium sequestration involved in muscular excitation/contraction. In Mus musculus (Mouse), this protein is Sarcoplasmic/endoplasmic reticulum calcium ATPase 1 (Atp2a1).